A 302-amino-acid polypeptide reads, in one-letter code: MRLIFMGSPDFSVPVLEALHAHHEVVCVYCQPPRPAGRGKKDRPTPVQTRAEELGLPVRHPTSLRTPEAQAEFAALGAEAAVVVAYGLILPQPILDAPERGCLNIHASLLPRWRGAAPIHRAILAGDAETGICIMQMEAGLDTGPVLMCEKTHIGPEETVQDLHDRLSDMGARLILGALGALDDLVPCPQPDAGVTYAEKIAKAEAGIDWTRPAAEIDRQIRGLSPFPGAWTLLNGERVKLLRCRQAEGQGAPGAVLPGLTIACGTGAVEITLAQREGKRPMEPEEFLRGFPLPEGSRAHTA.

108–111 (SLLP) is a binding site for (6S)-5,6,7,8-tetrahydrofolate. Basic and acidic residues predominate over residues 276–288 (REGKRPMEPEEFL). Residues 276 to 302 (REGKRPMEPEEFLRGFPLPEGSRAHTA) are disordered.

The protein belongs to the Fmt family.

It catalyses the reaction L-methionyl-tRNA(fMet) + (6R)-10-formyltetrahydrofolate = N-formyl-L-methionyl-tRNA(fMet) + (6S)-5,6,7,8-tetrahydrofolate + H(+). Attaches a formyl group to the free amino group of methionyl-tRNA(fMet). The formyl group appears to play a dual role in the initiator identity of N-formylmethionyl-tRNA by promoting its recognition by IF2 and preventing the misappropriation of this tRNA by the elongation apparatus. The sequence is that of Methionyl-tRNA formyltransferase from Cereibacter sphaeroides (strain KD131 / KCTC 12085) (Rhodobacter sphaeroides).